We begin with the raw amino-acid sequence, 567 residues long: D-lactate dehydrogenase [cytochrome], mitochondrial (567 aa).

The transit peptide at 1–56 directs the protein to the mitochondrion; the sequence is MAFASKFARSKTILSFLRPCRQLHSTPKSTGDVTVLSPVKGRRRLPTCWSSSLFPL. The 178-residue stretch at 142–319 folds into the FAD-binding PCMH-type domain; that stretch reads AVNIPDVVVF…TEITLRLQKI (178 aa).

Belongs to the FAD-binding oxidoreductase/transferase type 4 family. Homodimer. Requires FAD as cofactor. Expressed in leaves, stems, flowers and roots.

It is found in the mitochondrion. It carries out the reaction (R)-lactate + 2 Fe(III)-[cytochrome c] = 2 Fe(II)-[cytochrome c] + pyruvate + 2 H(+). Its activity is regulated as follows. Inhibited by cyanide ions. In terms of biological role, catalyzes the stereospecific oxidation of D-lactate to pyruvate. Involved in the detoxification of methylglyoxal and D-lactate, but probably not involved in the metabolization of glycolate. In Arabidopsis thaliana (Mouse-ear cress), this protein is D-lactate dehydrogenase [cytochrome], mitochondrial.